A 449-amino-acid polypeptide reads, in one-letter code: Chromosomal replication initiator protein DnaA (449 aa).

A domain I, interacts with DnaA modulators region spans residues 1 to 73; that stretch reads MTQNPQWLWQ…TETIAELLQQ (73 aa). Residues 73–109 are domain II; the sequence is QPVKVRLTSPEGNTLAATQSFYSSRSGQSTRPGKKTP. The segment covering 90 to 103 has biased composition (polar residues); that stretch reads TQSFYSSRSGQSTR. The segment at 90–110 is disordered; that stretch reads TQSFYSSRSGQSTRPGKKTPE. Residues 110 to 326 form a domain III, AAA+ region region; that stretch reads ELNSKYTFSR…GALLRAVTHI (217 aa). ATP-binding residues include G154, G156, K157, and T158. The segment at 327 to 449 is domain IV, binds dsDNA; the sequence is AISGLPMTVE…DRINHHHQNL (123 aa).

It belongs to the DnaA family. In terms of assembly, oligomerizes as a right-handed, spiral filament on DNA at oriC.

It localises to the cytoplasm. Its function is as follows. Plays an essential role in the initiation and regulation of chromosomal replication. ATP-DnaA binds to the origin of replication (oriC) to initiate formation of the DNA replication initiation complex once per cell cycle. Binds the DnaA box (a 9 base pair repeat at the origin) and separates the double-stranded (ds)DNA. Forms a right-handed helical filament on oriC DNA; dsDNA binds to the exterior of the filament while single-stranded (ss)DNA is stabiized in the filament's interior. The ATP-DnaA-oriC complex binds and stabilizes one strand of the AT-rich DNA unwinding element (DUE), permitting loading of DNA polymerase. After initiation quickly degrades to an ADP-DnaA complex that is not apt for DNA replication. Binds acidic phospholipids. This is Chromosomal replication initiator protein DnaA from Picosynechococcus sp. (strain ATCC 27264 / PCC 7002 / PR-6) (Agmenellum quadruplicatum).